Reading from the N-terminus, the 346-residue chain is Peripherin-2 (346 aa).

Topologically, residues 1 to 24 (MALMKTKFNLKRRVKLAQGLWLMN) are cytoplasmic. The helical transmembrane segment at 25-43 (WCCVLAGIALFSMGVFLKI) threads the bilayer. Residues 44–61 (ELRKRSEVMDNDESHFVP) are Lumenal-facing. The chain crosses the membrane as a helical span at residues 62–80 (NSLILMGSLACALNAFPGK). Residues 81–99 (ICYDSLDPTKFPRWKPMLK) lie on the Cytoplasmic side of the membrane. Residues 100-123 (PYLIICLIFNIFIFFTGVVCFLTR) traverse the membrane as a helical segment. The Lumenal portion of the chain corresponds to 124–264 (GSLESTLAHG…LNYYTSMMSS (141 aa)). A glycan (N-linked (GlcNAc...) asparagine) is linked at N229. The chain crosses the membrane as a helical span at residues 265–290 (MGGMVFLVWIMEMAVMIGLRFLHTCL). The Cytoplasmic portion of the chain corresponds to 291 to 346 (ETIANPEDPECESEGWILEKSLKDTIKSSWELVKSMGKLNKVETAGGEEAGVATVS).

This sequence belongs to the PRPH2/ROM1 family. As to quaternary structure, homodimer; disulfide-linked. As to expression, found in both rod and cone photoreceptors. Specifically in the rims and incisures of rod and cone outer segment disks.

The protein localises to the membrane. Functionally, may be involved in the morphogenesis of retina outer segment disks and the development and maintenance of the retina ultrastructure. The protein is Peripherin-2 (prph2) of Xenopus laevis (African clawed frog).